The chain runs to 312 residues: Ornithine carbamoyltransferase (312 aa).

Carbamoyl phosphate is bound by residues 50–53 (STRT), Gln-77, Arg-101, and 128–131 (HPCQ). L-ornithine contacts are provided by residues Asn-160, Asp-224, and 228–229 (SM). Carbamoyl phosphate contacts are provided by residues 264 to 265 (CL) and Arg-292.

Belongs to the aspartate/ornithine carbamoyltransferase superfamily. OTCase family.

It is found in the cytoplasm. It catalyses the reaction carbamoyl phosphate + L-ornithine = L-citrulline + phosphate + H(+). It functions in the pathway amino-acid biosynthesis; L-arginine biosynthesis; L-arginine from L-ornithine and carbamoyl phosphate: step 1/3. In terms of biological role, reversibly catalyzes the transfer of the carbamoyl group from carbamoyl phosphate (CP) to the N(epsilon) atom of ornithine (ORN) to produce L-citrulline. This is Ornithine carbamoyltransferase from Leifsonia xyli subsp. xyli (strain CTCB07).